The primary structure comprises 121 residues: UPF0102 protein BT_2236 (121 aa).

Belongs to the UPF0102 family.

The sequence is that of UPF0102 protein BT_2236 from Bacteroides thetaiotaomicron (strain ATCC 29148 / DSM 2079 / JCM 5827 / CCUG 10774 / NCTC 10582 / VPI-5482 / E50).